A 285-amino-acid chain; its full sequence is Probable enoyl-CoA hydratase echA12 (285 aa).

The protein belongs to the enoyl-CoA hydratase/isomerase family.

It catalyses the reaction a (3S)-3-hydroxyacyl-CoA = a (2E)-enoyl-CoA + H2O. It carries out the reaction a 4-saturated-(3S)-3-hydroxyacyl-CoA = a (3E)-enoyl-CoA + H2O. Its function is as follows. Could possibly oxidize fatty acids using specific components. In Mycobacterium bovis (strain ATCC BAA-935 / AF2122/97), this protein is Probable enoyl-CoA hydratase echA12 (echA12).